A 487-amino-acid polypeptide reads, in one-letter code: Glycogen synthase (487 aa).

ADP-alpha-D-glucose is bound at residue Lys-15.

Belongs to the glycosyltransferase 1 family. Bacterial/plant glycogen synthase subfamily.

It carries out the reaction [(1-&gt;4)-alpha-D-glucosyl](n) + ADP-alpha-D-glucose = [(1-&gt;4)-alpha-D-glucosyl](n+1) + ADP + H(+). The protein operates within glycan biosynthesis; glycogen biosynthesis. Synthesizes alpha-1,4-glucan chains using ADP-glucose. In Leptothrix cholodnii (strain ATCC 51168 / LMG 8142 / SP-6) (Leptothrix discophora (strain SP-6)), this protein is Glycogen synthase.